We begin with the raw amino-acid sequence, 63 residues long: Small integral membrane protein 43 (63 aa).

2 important for interaction with SLC2A1 and SLC2A3 regions span residues 7–29 and 51–57; these read LLLYLALFFFLLFLLFLLLFVVI and HREPWGF. The chain crosses the membrane as a helical span at residues 9 to 29; that stretch reads LYLALFFFLLFLLFLLLFVVI.

Interacts with glucose transporters SLC2A1/GLUT1 and SLC2A3/GLUT3; the interactions may promote SLC2A1- and SLC2A3-mediated glucose transport to meet the energy needs of mesendoderm differentiation.

It localises to the cell membrane. Required for mesendoderm differentiation. Interacts with glucose transporters and promotes glucose uptake. Probably augments the glucose uptake capacity of glucose transporter proteins to meet the energy needs of mesendoderm differentiation. The protein is Small integral membrane protein 43 of Homo sapiens (Human).